We begin with the raw amino-acid sequence, 168 residues long: Peptidyl-Lys metalloendopeptidase (168 aa).

Disulfide bonds link Cys-6/Cys-76 and Cys-78/Cys-98. His-118 contacts Zn(2+). The active site involves Glu-119. Positions 122 and 131 each coordinate Zn(2+).

Zn(2+) is required as a cofactor.

The protein resides in the secreted. It carries out the reaction Preferential cleavage in proteins: -Xaa-|-Lys- (in which Xaa may be Pro).. Its activity is regulated as follows. Inhibited by chelating agents such as EDTA and 1,10-phenanthroline. This is Peptidyl-Lys metalloendopeptidase (MEP) from Pleurotus ostreatus (Oyster mushroom).